The chain runs to 257 residues: MLDKIKHIILVLSGKGGVGKSTVSTQLALTLAESGHKVGLLDIDLCGPSVPFLLGLEGHDVHQCEQGWVPVFSGADQRLAVMSIGFLLKNRDEAVIWRGPKKTAMIKQFLEDVAWDELDYLVIDTPPGTSDEHITVMECLKGVNADGAIIVTTPQEMALEDVRKEVTFCKKTGIAILGIVENMSGFVCPNCAECTKIFSSGGGVALAELAQVPHLGTLPIDPRVGALAGTGKACVTELPDCTTSLVLKSIAKSIGAE.

14–21 (GKGGVGKS) contacts ATP. Cysteine 188 and cysteine 191 together coordinate [4Fe-4S] cluster.

The protein belongs to the Mrp/NBP35 ATP-binding proteins family. NUBP2/CFD1 subfamily. As to quaternary structure, heterotetramer of 2 NUBP1 and 2 NUBP2 chains. [4Fe-4S] cluster is required as a cofactor.

It localises to the cytoplasm. Its function is as follows. Component of the cytosolic iron-sulfur (Fe/S) protein assembly (CIA) machinery. Required for maturation of extramitochondrial Fe-S proteins. The NUBP1-NUBP2 heterotetramer forms a Fe-S scaffold complex, mediating the de novo assembly of an Fe-S cluster and its transfer to target apoproteins. This is Cytosolic Fe-S cluster assembly factor NUBP2 homolog from Culex quinquefasciatus (Southern house mosquito).